A 480-amino-acid chain; its full sequence is Protein nucleotidyltransferase YdiU (480 aa).

G86, G88, R89, K109, D121, G122, R172, and R179 together coordinate ATP. The active-site Proton acceptor is D248. 2 residues coordinate Mg(2+): N249 and D258. ATP is bound at residue D258.

It belongs to the SELO family. Mg(2+) serves as cofactor. It depends on Mn(2+) as a cofactor.

It carries out the reaction L-seryl-[protein] + ATP = 3-O-(5'-adenylyl)-L-seryl-[protein] + diphosphate. The enzyme catalyses L-threonyl-[protein] + ATP = 3-O-(5'-adenylyl)-L-threonyl-[protein] + diphosphate. It catalyses the reaction L-tyrosyl-[protein] + ATP = O-(5'-adenylyl)-L-tyrosyl-[protein] + diphosphate. The catalysed reaction is L-histidyl-[protein] + UTP = N(tele)-(5'-uridylyl)-L-histidyl-[protein] + diphosphate. It carries out the reaction L-seryl-[protein] + UTP = O-(5'-uridylyl)-L-seryl-[protein] + diphosphate. The enzyme catalyses L-tyrosyl-[protein] + UTP = O-(5'-uridylyl)-L-tyrosyl-[protein] + diphosphate. Nucleotidyltransferase involved in the post-translational modification of proteins. It can catalyze the addition of adenosine monophosphate (AMP) or uridine monophosphate (UMP) to a protein, resulting in modifications known as AMPylation and UMPylation. The sequence is that of Protein nucleotidyltransferase YdiU from Salmonella arizonae (strain ATCC BAA-731 / CDC346-86 / RSK2980).